Consider the following 21-residue polypeptide: Nigrocin-2 (21 aa).

Cysteine 15 and cysteine 21 form a disulfide bridge.

Expressed by the skin dorsal glands.

It localises to the secreted. Its function is as follows. Thanks to its single linear amphipathic alpha-helix, may integrate into membrane phospholipids, leading to lysis of the membrane. Shows antibacterial activity against both Gram-positive and Gram-negative bacteria and against the fungus C.albicans. Has no hemolytic activity. The polypeptide is Nigrocin-2 (Pelophylax nigromaculatus (Black-spotted frog)).